Here is a 195-residue protein sequence, read N- to C-terminus: Obelin (195 aa).

Residues 1–6 constitute a propeptide that is removed on maturation; that stretch reads MSSKYA. EF-hand domains lie at 17-52, 53-88, 110-145, and 146-181; these read RWIK…DICA, KLEA…FPQF, LIRE…SGIS, and PSQE…FWYT. D30, N32, N34, K36, and E41 together coordinate Ca(2+). D123, D125, S127, T129, E134, D159, D161, S163, D165, and E170 together coordinate Ca(2+).

This sequence belongs to the aequorin family.

Its function is as follows. Ca(2+)-dependent bioluminescence photoprotein. Displays an emission peak at 470 nm (blue light). Trace amounts of calcium ion trigger the intramolecular oxidation of the chromophore, coelenterazine into coelenteramide and CO(2) with the concomitant emission of light. This Obelia longissima (Black sea hydrozoan) protein is Obelin.